The primary structure comprises 517 residues: Serine O-succinyltransferase (517 aa).

A mitochondrion-targeting transit peptide spans 1–46; it reads MSPLNGVARSFPRPFQAVTRRPFRVVQPAIACPSNSRSFNHSRSLR. Over residues 36-64 the composition is skewed to polar residues; sequence SRSFNHSRSLRSTGSQSPAPSPRDSSNPA. Positions 36 to 66 are disordered; sequence SRSFNHSRSLRSTGSQSPAPSPRDSSNPALS. The region spanning 134-386 is the AB hydrolase-1 domain; sequence NVILLHTGLS…LTQQLATKKQ (253 aa). The important for substrate specificity stretch occupies residues 141-144; sequence GLSA. Ser238 functions as the Nucleophile in the catalytic mechanism. Arg307 provides a ligand contact to substrate. Residues 413-436 form a disordered region; the sequence is QPYQEQPSASTSAEQSASASETGS. A compositionally biased stretch (low complexity) spans 416-436; sequence QEQPSASTSAEQSASASETGS. Residues Asp461 and His498 contribute to the active site. Residue Asp499 participates in substrate binding.

It belongs to the AB hydrolase superfamily. MetX family.

The protein localises to the mitochondrion. It catalyses the reaction succinyl-CoA + L-serine = O-succinyl-L-serine + CoA. Its pathway is amino-acid biosynthesis; L-cysteine biosynthesis; L-cysteine from L-serine: step 1/2. Functionally, transfers a succinyl group from succinyl-CoA to L-serine, forming succinyl-L-serine. Also has weak serine acetyl transferase activity and homoserine succinyl transferase activity. The chain is Serine O-succinyltransferase from Emericella nidulans (strain FGSC A4 / ATCC 38163 / CBS 112.46 / NRRL 194 / M139) (Aspergillus nidulans).